Consider the following 489-residue polypeptide: MEAPDYEVLSVREQLFHERIRECIISTLLFATLYILCHIFLTRFKKPAEFTTVDDEDATVNKIALELCTFTLAIALGAVLLLPFSIISNEVLLSLPRNYYIQWLNGSLIHGLWNLVFLFSNLSLIFLMPFAYFFTESEGFAGSRKGVLGRVYETVVMLMLLTLLVLGMVWVASAIVDKNKANRESLYDFWEYYLPYLYSCISFLGVLLLLVCTPLGLARMFSVTGKLLVKPRLLEDLEEQLYCSAFEEAALTRRICNPTSCWLPLDMELLHRQVLALQTQRVLLEKRRKASAWQRNLGYPLAMLCLLVLTGLSVLIVAIHILELLIDEAAMPRGMQGTSLGQVSFSKLGSFGAVIQVVLIFYLMVSSVVGFYSSPLFRSLRPRWHDTAMTQIIGNCVCLLVLSSALPVFSRTLGLTRFDLLGDFGRFNWLGNFYIVFLYNAAFAGLTTLCLVKTFTAAVRAELIRAFGLDRLPLPVSGFPQASRKTQHQ.

At 1 to 21 (MEAPDYEVLSVREQLFHERIR) the chain is on the extracellular side. Residues 1-59 (MEAPDYEVLSVREQLFHERIRECIISTLLFATLYILCHIFLTRFKKPAEFTTVDDEDAT) form an interaction with LGB region. The tract at residues 1-76 (MEAPDYEVLS…LCTFTLAIAL (76 aa)) is LCN1-binding. The chain crosses the membrane as a helical span at residues 22 to 42 (ECIISTLLFATLYILCHIFLT). Over 43-66 (RFKKPAEFTTVDDEDATVNKIALE) the chain is Cytoplasmic. The helical transmembrane segment at 67-87 (LCTFTLAIALGAVLLLPFSII) threads the bilayer. Over 88 to 114 (SNEVLLSLPRNYYIQWLNGSLIHGLWN) the chain is Extracellular. A helical membrane pass occupies residues 115–135 (LVFLFSNLSLIFLMPFAYFFT). Residues 136 to 154 (ESEGFAGSRKGVLGRVYET) are Cytoplasmic-facing. A helical membrane pass occupies residues 155–175 (VVMLMLLTLLVLGMVWVASAI). The Extracellular segment spans residues 176-196 (VDKNKANRESLYDFWEYYLPY). Residues 197-217 (LYSCISFLGVLLLLVCTPLGL) form a helical membrane-spanning segment. Residues 218 to 305 (ARMFSVTGKL…NLGYPLAMLC (88 aa)) lie on the Cytoplasmic side of the membrane. The chain crosses the membrane as a helical span at residues 306 to 326 (LLVLTGLSVLIVAIHILELLI). At 327 to 350 (DEAAMPRGMQGTSLGQVSFSKLGS) the chain is on the extracellular side. Residues 351 to 371 (FGAVIQVVLIFYLMVSSVVGF) traverse the membrane as a helical segment. The Cytoplasmic segment spans residues 372-388 (YSSPLFRSLRPRWHDTA). Residues 389–409 (MTQIIGNCVCLLVLSSALPVF) traverse the membrane as a helical segment. The Extracellular portion of the chain corresponds to 410–431 (SRTLGLTRFDLLGDFGRFNWLG). Residues 432–452 (NFYIVFLYNAAFAGLTTLCLV) form a helical membrane-spanning segment. Topologically, residues 453 to 489 (KTFTAAVRAELIRAFGLDRLPLPVSGFPQASRKTQHQ) are cytoplasmic.

This sequence belongs to the LIMR family. Dimer. Can also form higher oligomers. Interacts with LCN1; this interaction mediates the endocytosis of LCN1. Interacts with UBAC2, FAF2, VCP, AMFR, ZNRF3, CTNNB1, LRP6, GSK3A and GSK3B. Interacts with DVL2 and RNF43. Interaction with SCGB1A1 has been observed in PubMed:16423471, but not in PubMed:23964685. Interaction with LGB which mediates the endocytosis of LGB has been observed in PubMed:17991420, but not in PubMed:23964685. Expressed in testis, pituitary gland, adrenal gland, trachea, placenta, thymus, cerebellum, stomach, mammary gland, spinal cord. A weaker expression is detected in colon, pancreas, and prostate.

Its subcellular location is the cell membrane. The protein localises to the endoplasmic reticulum membrane. Plays an essential role in lymphocyte development by negatively regulating the canonical Wnt signaling pathway. In association with UBAC2 and E3 ubiquitin-protein ligase AMFR, promotes the ubiquitin-mediated degradation of CTNNB1 and Wnt receptors FZD6 and LRP6. LMBR1L stabilizes the beta-catenin destruction complex that is required for regulating CTNNB1 levels. Acts as a LCN1 receptor and can mediate its endocytosis. This Homo sapiens (Human) protein is Protein LMBR1L (LMBR1L).